The following is a 92-amino-acid chain: Large ribosomal subunit protein bL25 (92 aa).

It belongs to the bacterial ribosomal protein bL25 family. As to quaternary structure, part of the 50S ribosomal subunit; part of the 5S rRNA/L5/L18/L25 subcomplex. Contacts the 5S rRNA. Binds to the 5S rRNA independently of L5 and L18.

Its function is as follows. This is one of the proteins that binds to the 5S RNA in the ribosome where it forms part of the central protuberance. The polypeptide is Large ribosomal subunit protein bL25 (Aliivibrio fischeri (strain MJ11) (Vibrio fischeri)).